The following is a 354-amino-acid chain: E2F transcription factor-like E2FF (354 aa).

The DNA-binding element occupies 21–86 (RKEKSLGVLV…RGKNQYSWKG (66 aa)). Positions 104–143 (ERLGYSSSNNSDKVSNGCEREEPLTLTPDDQENSSSSKMD) are disordered. A compositionally biased stretch (polar residues) spans 108 to 117 (YSSSNNSDKV). The DNA-binding element occupies 145–225 (KKEKSLWLLA…TRKPAYRWLG (81 aa)).

It belongs to the E2F/DP family. In terms of tissue distribution, high expression in young cotyledons and leaves, hypocotyls, shoot apical meristem, roots and mature pollen grains, moderate in developing trichomes, flowers and at early stages of developing anthers, and barely detectable in mature leaves. Not detected in primary root meristem, emerging lateral roots, pistils, developing embryos and siliques.

The protein localises to the nucleus. It localises to the cytoplasm. In terms of biological role, inhibitor of E2F-dependent activation of gene expression. Binds specifically the E2 recognition site without interacting with DP proteins and prevents transcription activation by E2F/DP heterodimers. Does not bind retinoblastoma-related proteins. Acts as a growth regulator but is not associated with changes in the expression of cell cycle marker genes or in nuclear ploidy levels. Has no effect on cell proliferation, but may repress cell wall biosynthesis genes during cell elongation in differentiated cells. The sequence is that of E2F transcription factor-like E2FF (E2FF) from Arabidopsis thaliana (Mouse-ear cress).